The following is a 337-amino-acid chain: Probable phospholipase A1 magnifin (337 aa).

The signal sequence occupies residues Met1–Ser21. A propeptide spanning residues His22–Arg33 is cleaved from the precursor. An intrachain disulfide couples Cys39 to Cys123. The Nucleophile role is filled by Ser173. Residue Asp201 is the Charge relay system of the active site. Disulfide bonds link Cys212-Cys217 and Cys255-Cys264. The active-site Charge relay system is the His266. 3 disulfide bridges follow: Cys281-Cys305, Cys282-Cys330, and Cys298-Cys303.

Belongs to the AB hydrolase superfamily. Lipase family. Expressed by the venom gland.

It localises to the secreted. The catalysed reaction is a 1,2-diacyl-sn-glycero-3-phosphocholine + H2O = a 2-acyl-sn-glycero-3-phosphocholine + a fatty acid + H(+). Functionally, catalyzes the hydrolysis of phosphatidylcholine with phospholipase A1 activity. May act as an allergen and induce hemolytic activity. In vivo, induces dose-dependent platelet aggregation (nanomolar concentration) and induces thrombosis. The polypeptide is Probable phospholipase A1 magnifin (Vespa magnifica (Hornet)).